The chain runs to 398 residues: O-methyltransferase aoiO (398 aa).

Residue Asp-251 participates in S-adenosyl-L-methionine binding. The active-site Proton acceptor is His-299.

This sequence belongs to the class I-like SAM-binding methyltransferase superfamily. Cation-independent O-methyltransferase family.

Its function is as follows. O-methyltransferase; part of the gene cluster that mediates the biosynthesis of a methylated derivative of known natural products orthosporin and diaporthin. Seems not to be involved in the biosynthesis of the identified final product of the pathway and its function has still to be determined. The polypeptide is O-methyltransferase aoiO (Aspergillus oryzae (strain ATCC 42149 / RIB 40) (Yellow koji mold)).